A 530-amino-acid chain; its full sequence is UDP-glucuronosyltransferase 2B31 (530 aa).

The N-terminal stretch at 1–24 is a signal peptide; the sequence is MSMKWISVLLGLQLSCYFSSGSCG. Lys-136 carries the N6-succinyllysine modification. N-linked (GlcNAc...) asparagine glycosylation is present at Asn-316. A helical transmembrane segment spans residues 495-515; the sequence is IGFLLACVATAIFVTTQCCLF.

It belongs to the UDP-glycosyltransferase family.

It is found in the microsome membrane. The protein localises to the endoplasmic reticulum membrane. The enzyme catalyses glucuronate acceptor + UDP-alpha-D-glucuronate = acceptor beta-D-glucuronoside + UDP + H(+). Its function is as follows. UDPGTs are of major importance in the conjugation and subsequent elimination of potentially toxic xenobiotics and endogenous compounds. This isozyme has glucuronidating capacity on phenols, opioids, and carboxylic acid-containing drugs. In Canis lupus familiaris (Dog), this protein is UDP-glucuronosyltransferase 2B31 (UGT2B31).